A 419-amino-acid chain; its full sequence is Tyrosine--tRNA ligase (419 aa).

Tyr34 lines the L-tyrosine pocket. The short motif at 39–48 (PTADSLHIGH) is the 'HIGH' region element. L-tyrosine contacts are provided by Tyr169, Gln173, and Asp176. The 'KMSKS' region motif lies at 230–234 (KFGKT). Lys233 contacts ATP. Residues 352 to 419 (VPLVELLVSA…KKKYYLIRYA (68 aa)) form the S4 RNA-binding domain.

Belongs to the class-I aminoacyl-tRNA synthetase family. TyrS type 1 subfamily. In terms of assembly, homodimer.

The protein resides in the cytoplasm. It catalyses the reaction tRNA(Tyr) + L-tyrosine + ATP = L-tyrosyl-tRNA(Tyr) + AMP + diphosphate + H(+). Its function is as follows. Catalyzes the attachment of tyrosine to tRNA(Tyr) in a two-step reaction: tyrosine is first activated by ATP to form Tyr-AMP and then transferred to the acceptor end of tRNA(Tyr). This chain is Tyrosine--tRNA ligase (tyrS), found in Geobacillus stearothermophilus (Bacillus stearothermophilus).